Here is a 405-residue protein sequence, read N- to C-terminus: Polyadenylate-binding protein RBP45B (405 aa).

The segment covering 1-19 has biased composition (pro residues); it reads MMQQPPPGGILPHHAPPPS. The tract at residues 1 to 54 is disordered; it reads MMQQPPPGGILPHHAPPPSAQQQYGYQQPYGIAGAAPPPPQMWNPQAAAPPSVQ. Low complexity predominate over residues 20 to 35; the sequence is AQQQYGYQQPYGIAGA. 3 RRM domains span residues 62–143, 155–234, and 261–333; these read RTLW…WASL, YTIF…PAAS, and TTVF…WGRS. A disordered region spans residues 379-405; sequence GGYQQTPQAGQQPPQQPPQQQQVGFSY. The segment covering 380-405 has biased composition (low complexity); it reads GYQQTPQAGQQPPQQPPQQQQVGFSY.

This sequence belongs to the polyadenylate-binding RBP45 family. In terms of assembly, both isoform 1 and isoform 2 interact with poly(A)+ RNA in nucleus. In terms of tissue distribution, expressed in roots, leaves, stems, flowers, siliques, and seedlings. Present in immature anther tissues (tapetum cells) and mature pollen grains.

Its subcellular location is the nucleus. In terms of biological role, heterogeneous nuclear ribonucleoprotein (hnRNP)-protein binding the poly(A) tail of mRNA and probably involved in some steps of pre-mRNA maturation. The polypeptide is Polyadenylate-binding protein RBP45B (RBP45B) (Arabidopsis thaliana (Mouse-ear cress)).